Reading from the N-terminus, the 134-residue chain is IIYPGTLWCGHGNVSSGPNELGRFKHTDACCRTHDMCPDVMSAGESKHGLTNTASHTRLSCDCDDTFYDCLKNSGDKISSYFVGKMYFNLIDTKCYKLEHPVTGCGERTEGRCLRYTVDKSKPKAYQWFDLRKY.

Positions 8, 10, and 12 each coordinate Ca(2+). 5 disulfide bridges follow: cysteine 9–cysteine 31, cysteine 30–cysteine 70, cysteine 37–cysteine 63, cysteine 61–cysteine 95, and cysteine 105–cysteine 113. The N-linked (GlcNAc...) asparagine glycan is linked to asparagine 13. Residue histidine 34 is part of the active site. Aspartate 35 provides a ligand contact to Ca(2+). Aspartate 64 is an active-site residue.

The protein belongs to the phospholipase A2 family. Group III subfamily. The cofactor is Ca(2+). Expressed by the venom gland.

It localises to the secreted. It carries out the reaction a 1,2-diacyl-sn-glycero-3-phosphocholine + H2O = a 1-acyl-sn-glycero-3-phosphocholine + a fatty acid + H(+). Its function is as follows. PLA2 catalyzes the calcium-dependent hydrolysis of the 2-acyl groups in 3-sn-phosphoglycerides. In Apis cerana cerana (Oriental honeybee), this protein is Phospholipase A2.